A 202-amino-acid chain; its full sequence is Glycolipid transfer protein 1 (202 aa).

A ganglioside GM3 (d18:1(4E)) is bound by residues Asp-52, Asn-56, Trp-99, and His-138.

This sequence belongs to the GLTP family.

Its function is as follows. May be involved in glycolipids transfer. The chain is Glycolipid transfer protein 1 from Arabidopsis thaliana (Mouse-ear cress).